The primary structure comprises 354 residues: Probable L-ascorbate-6-phosphate lactonase UlaG (354 aa).

It belongs to the UlaG family. Requires a divalent metal cation as cofactor.

The protein resides in the cytoplasm. It carries out the reaction L-ascorbate 6-phosphate + H2O = 3-dehydro-L-gulonate 6-phosphate. Its pathway is cofactor degradation; L-ascorbate degradation; D-xylulose 5-phosphate from L-ascorbate: step 1/4. Functionally, probably catalyzes the hydrolysis of L-ascorbate-6-P into 3-keto-L-gulonate-6-P. Is essential for L-ascorbate utilization under anaerobic conditions. The protein is Probable L-ascorbate-6-phosphate lactonase UlaG of Escherichia fergusonii (strain ATCC 35469 / DSM 13698 / CCUG 18766 / IAM 14443 / JCM 21226 / LMG 7866 / NBRC 102419 / NCTC 12128 / CDC 0568-73).